We begin with the raw amino-acid sequence, 103 residues long: Small ribosomal subunit protein uS10 (103 aa).

This sequence belongs to the universal ribosomal protein uS10 family. Part of the 30S ribosomal subunit.

In terms of biological role, involved in the binding of tRNA to the ribosomes. The protein is Small ribosomal subunit protein uS10 of Shewanella halifaxensis (strain HAW-EB4).